Reading from the N-terminus, the 854-residue chain is Protein mono-ADP-ribosyltransferase PARP9 (854 aa).

Macro domains follow at residues 107–296 (LQVF…EFIL) and 306–487 (TPSF…AKRS). Residues 628 to 850 (IQQQKTQDEM…QHPWRGFASG (223 aa)) form the PARP catalytic domain.

The protein belongs to the ARTD/PARP family. Forms a stable complex with E3 ligase DTX3L; the interaction is required for PARP9 mediated ADP-ribosylation of ubiquitin. Interacts (via PARP catalytic domain) with DTX3L (via N-terminus). Forms a complex with STAT1 and DTX3L independently of IFNB1 or IFNG-mediated STAT1 'Tyr-701' phosphorylation. Forms a complex with STAT1, DTX3L and histone H2B H2BC9/H2BJ; the interaction is likely to induce H2BC9/H2BJ ubiquitination. Interacts (via N-terminus) with STAT1. Interacts with PARP14 in IFNG-stimulated macrophages; the interaction prevents PARP14-mediated STAT1 and STAT6 ADP-riboslylation. Interacts with PARP1 (when poly-ADP-ribosylated). ADP-ribosylated by PARP14. Expressed in lymphocyte-rich tissues, spleen, lymph nodes, peripheral blood lymphocytes and colonic mucosa. Expressed in macrophages. Also expressed in nonhematopoietic tissues such as heart and skeletal muscle. Isoform 2 is the predominant form. Most abundantly expressed in lymphomas with a brisk host inflammatory response. In diffuse large B-cell lymphomas tumors, expressed specifically by malignant B-cells.

It localises to the cytoplasm. Its subcellular location is the cytosol. The protein resides in the nucleus. It carries out the reaction [protein]-C-terminal glycine + NAD(+) = [protein]-C-terminal O-(ADP-D-ribosyl)-glycine + nicotinamide. Its activity is regulated as follows. Binding to poly(ADP-ribose) does not affect its activity. Functionally, ADP-ribosyltransferase which, in association with E3 ligase DTX3L, plays a role in DNA damage repair and in immune responses including interferon-mediated antiviral defenses. Within the complex, enhances DTX3L E3 ligase activity which is further enhanced by PARP9 binding to poly(ADP-ribose). In association with DTX3L and in presence of E1 and E2 enzymes, mediates NAD(+)-dependent mono-ADP-ribosylation of ubiquitin which prevents ubiquitin conjugation to substrates such as histones. During DNA repair, PARP1 recruits PARP9/BAL1-DTX3L complex to DNA damage sites via PARP9 binding to ribosylated PARP1. Subsequent PARP1-dependent PARP9/BAL1-DTX3L-mediated ubiquitination promotes the rapid and specific recruitment of 53BP1/TP53BP1, UIMC1/RAP80, and BRCA1 to DNA damage sites. In response to DNA damage, PARP9-DTX3L complex is required for efficient non-homologous end joining (NHEJ); the complex function is negatively modulated by PARP9 activity. Dispensable for B-cell receptor (BCR) assembly through V(D)J recombination and class switch recombination (CSR). In macrophages, positively regulates pro-inflammatory cytokines production in response to IFNG stimulation by suppressing PARP14-mediated STAT1 ADP-ribosylation and thus promoting STAT1 phosphorylation. Also suppresses PARP14-mediated STAT6 ADP-ribosylation. The polypeptide is Protein mono-ADP-ribosyltransferase PARP9 (PARP9) (Homo sapiens (Human)).